The following is a 632-amino-acid chain: Deoxynucleoside triphosphate triphosphohydrolase SAMHD1 (632 aa).

The disordered stretch occupies residues 1–22; that stretch reads MKGINGAKRVRHDASPSAQDGY. The SAM domain maps to 44–107; the sequence is WDVEEVCLFL…LSCLRMLCQN (64 aa). Positions 113 and 114 each coordinate GTP. N116 contributes to the dGTP binding site. Residues D134, Q139, and R142 each contribute to the GTP site. Q146, L147, V153, and R161 together coordinate dGTP. Q146 provides a ligand contact to dATP. Q146 is a binding site for dCTP. Position 146 (Q146) interacts with dTTP. R161 lines the dATP pocket. Residue R161 participates in dCTP binding. R161 contributes to the dTTP binding site. One can recognise an HD domain in the interval 161 to 321; that stretch reads RFEHSIGVGY…GIDVDKWDYF (161 aa). Mn(2+) contacts are provided by H164, H203, and D204. DATP-binding residues include H207 and H212. DCTP contacts are provided by H207 and H212. DTTP-binding residues include H207 and H212. The active site involves H230. D316 provides a ligand contact to Mn(2+). DGTP-binding residues include K317, Y320, D324, R338, R357, K359, N363, R371, Y379, Q380, H381, and K382. DATP contacts are provided by K317, Y320, and D324. The dCTP site is built by K317, Y320, and D324. Residues K317, Y320, and D324 each contribute to the dTTP site. Residue R371 participates in dATP binding. R371 lines the dCTP pocket. DATP is bound at residue Q380. Q380 contacts dCTP. Q380 is a dTTP binding site. The GTP site is built by R456, K460, and K529. K529 is a dGTP binding site.

Belongs to the SAMHD1 family. In terms of assembly, homodimer; in absence of GTP and dNTP. Homotetramer; in GTP- and dNTP-bound form. Interacts with rbbp8/CtIP. It depends on Zn(2+) as a cofactor.

Its subcellular location is the nucleus. It is found in the chromosome. It catalyses the reaction a 2'-deoxyribonucleoside 5'-triphosphate + H2O = a 2'-deoxyribonucleoside + triphosphate + H(+). It carries out the reaction dATP + H2O = 2'-deoxyadenosine + triphosphate + H(+). The catalysed reaction is dCTP + H2O = 2'-deoxycytidine + triphosphate + H(+). The enzyme catalyses dGTP + H2O = 2'-deoxyguanosine + triphosphate + H(+). It catalyses the reaction dTTP + H2O = thymidine + triphosphate + H(+). Its activity is regulated as follows. Allosterically activated and regulated via the combined actions of GTP and dNTPs (dATP, dGTP, dTTP and dCTP): Allosteric site 1 binds GTP, while allosteric site 2 binds dNTP. Allosteric activation promotes the formation of highly active homotetramers. Protein that acts both as a host restriction factor involved in defense response to virus and as a regulator of DNA end resection at stalled replication forks. Has deoxynucleoside triphosphate (dNTPase) activity, which is required to restrict infection by viruses: dNTPase activity reduces cellular dNTP levels to levels too low for retroviral reverse transcription to occur, blocking early-stage virus replication in dendritic and other myeloid cells. Functions during S phase at stalled DNA replication forks to promote the resection of gapped or reversed forks: acts by stimulating the exonuclease activity of mre11, activating the ATR-CHK1 pathway and allowing the forks to restart replication. Ability to promote DNA end resection at stalled replication forks is independent of dNTPase activity. In Xenopus laevis (African clawed frog), this protein is Deoxynucleoside triphosphate triphosphohydrolase SAMHD1.